The sequence spans 289 residues: 4-hydroxy-3-methylbut-2-enyl diphosphate reductase (289 aa).

Cys13 lines the [4Fe-4S] cluster pocket. (2E)-4-hydroxy-3-methylbut-2-enyl diphosphate-binding residues include His41 and His75. Positions 41 and 75 each coordinate dimethylallyl diphosphate. His41 and His75 together coordinate isopentenyl diphosphate. Cys97 is a [4Fe-4S] cluster binding site. His129 contacts (2E)-4-hydroxy-3-methylbut-2-enyl diphosphate. His129 is a binding site for dimethylallyl diphosphate. Residue His129 coordinates isopentenyl diphosphate. The Proton donor role is filled by Glu131. Residue Thr167 participates in (2E)-4-hydroxy-3-methylbut-2-enyl diphosphate binding. Residue Cys198 participates in [4Fe-4S] cluster binding. Positions 226, 227, 228, and 270 each coordinate (2E)-4-hydroxy-3-methylbut-2-enyl diphosphate. Residues Ser226, Ser227, Asn228, and Ser270 each coordinate dimethylallyl diphosphate. The isopentenyl diphosphate site is built by Ser226, Ser227, Asn228, and Ser270.

Belongs to the IspH family. It depends on [4Fe-4S] cluster as a cofactor.

It carries out the reaction isopentenyl diphosphate + 2 oxidized [2Fe-2S]-[ferredoxin] + H2O = (2E)-4-hydroxy-3-methylbut-2-enyl diphosphate + 2 reduced [2Fe-2S]-[ferredoxin] + 2 H(+). The catalysed reaction is dimethylallyl diphosphate + 2 oxidized [2Fe-2S]-[ferredoxin] + H2O = (2E)-4-hydroxy-3-methylbut-2-enyl diphosphate + 2 reduced [2Fe-2S]-[ferredoxin] + 2 H(+). It functions in the pathway isoprenoid biosynthesis; dimethylallyl diphosphate biosynthesis; dimethylallyl diphosphate from (2E)-4-hydroxy-3-methylbutenyl diphosphate: step 1/1. Its pathway is isoprenoid biosynthesis; isopentenyl diphosphate biosynthesis via DXP pathway; isopentenyl diphosphate from 1-deoxy-D-xylulose 5-phosphate: step 6/6. Its function is as follows. Catalyzes the conversion of 1-hydroxy-2-methyl-2-(E)-butenyl 4-diphosphate (HMBPP) into a mixture of isopentenyl diphosphate (IPP) and dimethylallyl diphosphate (DMAPP). Acts in the terminal step of the DOXP/MEP pathway for isoprenoid precursor biosynthesis. The sequence is that of 4-hydroxy-3-methylbut-2-enyl diphosphate reductase from Bacteroides thetaiotaomicron (strain ATCC 29148 / DSM 2079 / JCM 5827 / CCUG 10774 / NCTC 10582 / VPI-5482 / E50).